The following is a 417-amino-acid chain: MDHATLAMILAIWFISFHFIKLLFSQQTTKLLPPGPKPLPIIGNILEVGKKPHRSFANLAKIHGPLISLRLGSVTTIVVSSADVAKEMFLKKDHPLSNRTIPNSVTAGDHHKLTMSWLPVSPKWRNFRKITAVHLLSPQRLDACQTFRHAKVQQLYEYVQECAQKGQAVDIGKAAFTTSLNLLSKLFFSVELAHHKSHTSQEFKELIWNIMEDIGKPNYADYFPILGCVDPSGIRRRLACSFDKLIAVFQSIICERLAPDSSTATTTTTDDVLDVLLQLFKQNELTMGEINHLLVDIFDAGTDTTSSTFEWVMAELIRNPEMMEKAQEEIKQVLGKDKQIQESDIINLPYLQAIIKETLRLHPPTVFLLPRKADTDVELYGYIVPKDAQIKYLLTYGLLEEILMHGKMLIFFRPKDL.

Residues alanine 4 to phenylalanine 24 form a helical membrane-spanning segment.

Belongs to the cytochrome P450 family.

The protein resides in the membrane. The protein operates within pigment biosynthesis; betalain biosynthesis. Inactive cytochrome unable to convert L-DOPA to cyclo-DOPA in the betalain pathway and producing a yellow mutant phenotype. A frameshift replaces 108 amino acids of the active protein found in red beets (AC I3PFJ5) with 27 new residues followed by a stop codon. The sequence is that of Inactive cytochrome P450 76AD1 from Beta vulgaris (Sugar beet).